The chain runs to 212 residues: HTH-type transcriptional repressor KstR (212 aa).

Over residues 1 to 11 (MTTSSRSRSST) the composition is skewed to low complexity. Residues 1–28 (MTTSSRSRSSTVAAATLGEDDLSSNAQK) form a disordered region. Positions 28 to 88 (KERRKRILDA…SALAREFERI (61 aa)) constitute an HTH tetR-type domain. The segment at residues 51 to 70 (QMRAVAERADVAVGTLYRYF) is a DNA-binding region (H-T-H motif).

As to quaternary structure, homodimer.

Controls the expression of genes used for utilizing diverse lipids as energy sources. This Rhodococcus jostii (strain RHA1) protein is HTH-type transcriptional repressor KstR (kstR).